Reading from the N-terminus, the 1015-residue chain is PHD finger protein 20-like protein 1 (1015 aa).

A Tudor 1 domain is found at 11–71; the sequence is ITFEIGARLE…SNRLRPLERP (61 aa). Residues Lys-75 and Lys-79 each participate in a glycyl lysine isopeptide (Lys-Gly) (interchain with G-Cter in SUMO2) cross-link. The region spanning 85-141 is the Tudor 2 domain; the sequence is FDFKAGEEVLARWTDCRYYPAKIEAINKEGTFTVQFYDGVIRCLKRMHIKAMPEDAK. Disordered regions lie at residues 183 to 206 and 309 to 367; these read AKNK…RDGG and EQAI…KAPK. Composition is skewed to polar residues over residues 186–197 and 315–346; these read KTGSKPRTSANS and KPQS…SSGK. Ser-368 carries the phosphoserine modification. 2 disordered regions span residues 389-455 and 478-513; these read VINK…SSVP and CGSE…NPTS. Basic residues predominate over residues 404–415; sequence PCKHSERRRRSQ. Ser-432 carries the phosphoserine modification. Composition is skewed to polar residues over residues 443-453 and 480-489; these read SISSQNQQESS and SEVTGSQAPD. Residue Lys-530 forms a Glycyl lysine isopeptide (Lys-Gly) (interchain with G-Cter in SUMO2) linkage. Residues 539 to 565 are compositionally biased toward basic and acidic residues; that stretch reads EKTSTAFGKRKEKDKERKEKRDKDHYK. The tract at residues 539–585 is disordered; it reads EKTSTAFGKRKEKDKERKEKRDKDHYKPKQKKKKKKKKKSKQHDYSD. Residues 566–579 are compositionally biased toward basic residues; it reads PKQKKKKKKKKKSK. A PHD-type zinc finger spans residues 681-729; sequence IVRCICELDEENGFMIQCEECLCWQHSVCMGLLEDSIPEQYICYICRDP. Residue Lys-849 forms a Glycyl lysine isopeptide (Lys-Gly) (interchain with G-Cter in SUMO2) linkage. The span at 859–878 shows a compositional bias: polar residues; sequence HSYQKPQSFSQDCHSLTDPG. Residues 859–889 form a disordered region; sequence HSYQKPQSFSQDCHSLTDPGSSDDDDVSSFE. Acidic residues predominate over residues 879–889; that stretch reads SSDDDDVSSFE. Lys-907 carries the post-translational modification N6-acetyllysine.

As to quaternary structure, interacts with methylated DNMT1 (DNMT1K142me1). Interacts with SOX2.

Its subcellular location is the nucleus. Functionally, is a negative regulator of proteasomal degradation of a set of methylated proteins, including DNMT1 and SOX2. Involved in the maintainance of embryonic stem cells pluripotency, through the regulation of SOX2 levels. The chain is PHD finger protein 20-like protein 1 (Phf20l1) from Rattus norvegicus (Rat).